Reading from the N-terminus, the 335-residue chain is 7,8-didemethyl-8-hydroxy-5-deazariboflavin synthase (335 aa).

In terms of domain architecture, Radical SAM core spans 1 to 246 (MTYSKNVFIP…QVAPNLIDPK (246 aa)). Positions 15, 19, and 22 each coordinate [4Fe-4S] cluster.

Belongs to the radical SAM superfamily. CofG family. Consists of two subunits, CofG and CofH. [4Fe-4S] cluster serves as cofactor.

It carries out the reaction 5-amino-5-(4-hydroxybenzyl)-6-(D-ribitylimino)-5,6-dihydrouracil + S-adenosyl-L-methionine = 7,8-didemethyl-8-hydroxy-5-deazariboflavin + 5'-deoxyadenosine + L-methionine + NH4(+) + H(+). The protein operates within cofactor biosynthesis; coenzyme F0 biosynthesis. Its function is as follows. Catalyzes the radical-mediated synthesis of 7,8-didemethyl-8-hydroxy-5-deazariboflavin from 5-amino-5-(4-hydroxybenzyl)-6-(D-ribitylimino)-5,6-dihydrouracil. In Methanosarcina mazei (strain ATCC BAA-159 / DSM 3647 / Goe1 / Go1 / JCM 11833 / OCM 88) (Methanosarcina frisia), this protein is 7,8-didemethyl-8-hydroxy-5-deazariboflavin synthase.